The sequence spans 105 residues: Met repressor (105 aa).

This sequence belongs to the MetJ family. As to quaternary structure, homodimer.

The protein resides in the cytoplasm. In terms of biological role, this regulatory protein, when combined with SAM (S-adenosylmethionine) represses the expression of the methionine regulon and of enzymes involved in SAM synthesis. The sequence is that of Met repressor from Serratia proteamaculans (strain 568).